The sequence spans 335 residues: HTH-type transcriptional regulator LacR (335 aa).

Residues 1-58 (MRTIKEIALESGYSPATVSRLLNNDPNLSITADTKNKILEIANKLGYWEDHQEKKIKP) enclose the HTH lacI-type domain. The segment at residues 4–23 (IKEIALESGYSPATVSRLLN) is a DNA-binding region (H-T-H motif).

It functions in the pathway carbohydrate metabolism; lactose degradation [regulation]. Functionally, negatively regulates the transcription of the lactose utilization genes lacL and lacM. In Lactobacillus helveticus (Lactobacillus suntoryeus), this protein is HTH-type transcriptional regulator LacR (lacR).